A 330-amino-acid chain; its full sequence is Aspartate--ammonia ligase (330 aa).

Belongs to the class-II aminoacyl-tRNA synthetase family. AsnA subfamily.

The protein localises to the cytoplasm. It catalyses the reaction L-aspartate + NH4(+) + ATP = L-asparagine + AMP + diphosphate + H(+). It participates in amino-acid biosynthesis; L-asparagine biosynthesis; L-asparagine from L-aspartate (ammonia route): step 1/1. The sequence is that of Aspartate--ammonia ligase from Enterobacter sp. (strain 638).